A 230-amino-acid polypeptide reads, in one-letter code: ATP synthase subunit a (230 aa).

6 helical membrane-spanning segments follow: residues 16-36 (LVLF…WLSI), 73-93 (WVSA…LGLL), 106-126 (TYSI…YLAF), 142-162 (LIPF…IALG), 165-185 (LAAN…AIWT), and 192-212 (IASI…GVAC).

It belongs to the ATPase A chain family. F-type ATPases have 2 components, CF(1) - the catalytic core - and CF(0) - the membrane proton channel. CF(1) has five subunits: alpha(3), beta(3), gamma(1), delta(1), epsilon(1). CF(0) has three main subunits: a, b and c.

It is found in the mitochondrion inner membrane. Its function is as follows. Mitochondrial membrane ATP synthase (F(1)F(0) ATP synthase or Complex V) produces ATP from ADP in the presence of a proton gradient across the membrane which is generated by electron transport complexes of the respiratory chain. F-type ATPases consist of two structural domains, F(1) - containing the extramembraneous catalytic core and F(0) - containing the membrane proton channel, linked together by a central stalk and a peripheral stalk. During catalysis, ATP synthesis in the catalytic domain of F(1) is coupled via a rotary mechanism of the central stalk subunits to proton translocation. Key component of the proton channel; it may play a direct role in the translocation of protons across the membrane. This Patiria pectinifera (Starfish) protein is ATP synthase subunit a (ATP6).